Here is a 194-residue protein sequence, read N- to C-terminus: NADH-quinone oxidoreductase subunit B (194 aa).

Residues 1 to 11 (MGVIATPPPSV) show a composition bias toward pro residues. The interval 1-24 (MGVIATPPPSVQGPSSQVPSSAPI) is disordered. Positions 12–21 (QGPSSQVPSS) are enriched in low complexity. Residues Cys-72, Cys-73, Cys-137, and Cys-167 each contribute to the [4Fe-4S] cluster site.

It belongs to the complex I 20 kDa subunit family. As to quaternary structure, NDH-1 is composed of 14 different subunits. Subunits NuoB, C, D, E, F, and G constitute the peripheral sector of the complex. [4Fe-4S] cluster is required as a cofactor.

The protein resides in the cell inner membrane. It carries out the reaction a quinone + NADH + 5 H(+)(in) = a quinol + NAD(+) + 4 H(+)(out). NDH-1 shuttles electrons from NADH, via FMN and iron-sulfur (Fe-S) centers, to quinones in the respiratory chain. The immediate electron acceptor for the enzyme in this species is believed to be ubiquinone. Couples the redox reaction to proton translocation (for every two electrons transferred, four hydrogen ions are translocated across the cytoplasmic membrane), and thus conserves the redox energy in a proton gradient. The protein is NADH-quinone oxidoreductase subunit B of Rhodospirillum centenum (strain ATCC 51521 / SW).